The sequence spans 459 residues: Putrescine aminotransferase (459 aa).

Pyridoxal 5'-phosphate contacts are provided by residues 150-151 (GT) and Gln-274. Position 300 is an N6-(pyridoxal phosphate)lysine (Lys-300). Thr-332 contributes to the pyridoxal 5'-phosphate binding site.

The protein belongs to the class-III pyridoxal-phosphate-dependent aminotransferase family. Putrescine aminotransferase subfamily. It depends on pyridoxal 5'-phosphate as a cofactor.

The catalysed reaction is an alkane-alpha,omega-diamine + 2-oxoglutarate = an omega-aminoaldehyde + L-glutamate. The enzyme catalyses putrescine + 2-oxoglutarate = 1-pyrroline + L-glutamate + H2O. It catalyses the reaction cadaverine + 2-oxoglutarate = 5-aminopentanal + L-glutamate. The protein operates within amine and polyamine degradation; putrescine degradation; 4-aminobutanal from putrescine (transaminase route): step 1/1. Catalyzes the aminotransferase reaction from putrescine to 2-oxoglutarate, leading to glutamate and 4-aminobutanal, which spontaneously cyclizes to form 1-pyrroline. This is the first step in one of two pathways for putrescine degradation, where putrescine is converted into 4-aminobutanoate (gamma-aminobutyrate or GABA) via 4-aminobutanal. Also functions as a cadaverine transaminase in a a L-lysine degradation pathway to succinate that proceeds via cadaverine, glutarate and L-2-hydroxyglutarate. The polypeptide is Putrescine aminotransferase (Salmonella choleraesuis (strain SC-B67)).